We begin with the raw amino-acid sequence, 373 residues long: Probable pectin lyase C (373 aa).

The N-terminal stretch at 1-18 (MKVPFLQLLCLNAALASA) is a signal peptide. Intrachain disulfides connect C81–C100 and C90–C220. N123 carries N-linked (GlcNAc...) asparagine glycosylation. R250 is a catalytic residue. C316 and C324 form a disulfide bridge.

Belongs to the polysaccharide lyase 1 family.

It localises to the secreted. It catalyses the reaction Eliminative cleavage of (1-&gt;4)-alpha-D-galacturonan methyl ester to give oligosaccharides with 4-deoxy-6-O-methyl-alpha-D-galact-4-enuronosyl groups at their non-reducing ends.. Its function is as follows. Pectinolytic enzymes consist of four classes of enzymes: pectin lyase, polygalacturonase, pectin methylesterase and rhamnogalacturonase. Among pectinolytic enzymes, pectin lyase is the most important in depolymerization of pectin, since it cleaves internal glycosidic bonds of highly methylated pectins. This is Probable pectin lyase C (pelC) from Aspergillus niger (strain ATCC MYA-4892 / CBS 513.88 / FGSC A1513).